Reading from the N-terminus, the 735-residue chain is F-box and leucine-rich repeat protein 13 (735 aa).

The F-box domain maps to 152–198 (KCDISLLPERAILQIFFYLSLKDVIICGQVNHAWMLMTQLNSLWNAI). LRR repeat units follow at residues 230–254 (GCLL…NVSD), 255–280 (CPTF…NLSN), 281–305 (TTIT…SLAY), 306–333 (CRRF…DLSG), 334–359 (CTQI…TIND), 360–385 (MPTL…VFTG), 386–406 (APHI…RKIR), 410–435 (NKRV…YMAD), 436–460 (CKGI…NLAN), 461–488 (CVRI…NLSN), 489–514 (CVRL…SLRN), 515–538 (CEHL…IDLS), 539–563 (GTDI…SVSE), 564–589 (CYRI…DVSY), 590–615 (CSQL…SIAG), 616–641 (CPKI…DISG), and 642–667 (CVLL…KMQY). Polar residues predominate over residues 682–692 (KVQQQEYNTND). A disordered region spans residues 682-703 (KVQQQEYNTNDPPRWFGYDREG).

It belongs to the DRC6 family. Component of the nexin-dynein regulatory complex (N-DRC). Directly interacts with SKP1 and CUL1. Interacts with TCTE1/DRC5.

The protein resides in the cytoplasm. It localises to the cytoskeleton. It is found in the flagellum axoneme. Its subcellular location is the microtubule organizing center. The protein localises to the centrosome. Its function is as follows. Substrate-recognition component of the SCF (SKP1-CUL1-F-box protein)-type E3 ubiquitin ligase complex. Component of the nexin-dynein regulatory complex (N-DRC), a key regulator of ciliary/flagellar motility which maintains the alignment and integrity of the distal axoneme and regulates microtubule sliding in motile axonemes. Specifically targets CEP192 isoform 3 for ubiquitin-mediated proteolysis and thereby acts as a regulator of microtubule nucleation activity. The protein is F-box and leucine-rich repeat protein 13 (FBXL13) of Homo sapiens (Human).